Reading from the N-terminus, the 594-residue chain is Aspartate--tRNA(Asp/Asn) ligase (594 aa).

Glutamate 176 contacts L-aspartate. An aspartate region spans residues 200–203 (QIFK). Arginine 222 contributes to the L-aspartate binding site. Residues 222-224 (RDE) and glutamine 231 contribute to the ATP site. Histidine 450 lines the L-aspartate pocket. ATP is bound at residue glutamate 484. Arginine 491 contributes to the L-aspartate binding site. 536 to 539 (GLDR) is an ATP binding site.

Belongs to the class-II aminoacyl-tRNA synthetase family. Type 1 subfamily. In terms of assembly, homodimer.

The protein localises to the cytoplasm. It catalyses the reaction tRNA(Asx) + L-aspartate + ATP = L-aspartyl-tRNA(Asx) + AMP + diphosphate. Its function is as follows. Aspartyl-tRNA synthetase with relaxed tRNA specificity since it is able to aspartylate not only its cognate tRNA(Asp) but also tRNA(Asn). Reaction proceeds in two steps: L-aspartate is first activated by ATP to form Asp-AMP and then transferred to the acceptor end of tRNA(Asp/Asn). The polypeptide is Aspartate--tRNA(Asp/Asn) ligase (Geobacillus sp. (strain WCH70)).